The sequence spans 198 residues: Ribonuclease HII (198 aa).

The 189-residue stretch at Q10–S198 folds into the RNase H type-2 domain. D16, E17, and D108 together coordinate a divalent metal cation.

Belongs to the RNase HII family. It depends on Mn(2+) as a cofactor. Requires Mg(2+) as cofactor.

The protein resides in the cytoplasm. The catalysed reaction is Endonucleolytic cleavage to 5'-phosphomonoester.. In terms of biological role, endonuclease that specifically degrades the RNA of RNA-DNA hybrids. This Escherichia coli O45:K1 (strain S88 / ExPEC) protein is Ribonuclease HII.